We begin with the raw amino-acid sequence, 690 residues long: Glycine--tRNA ligase beta subunit (690 aa).

This sequence belongs to the class-II aminoacyl-tRNA synthetase family. Tetramer of two alpha and two beta subunits.

The protein resides in the cytoplasm. It catalyses the reaction tRNA(Gly) + glycine + ATP = glycyl-tRNA(Gly) + AMP + diphosphate. This is Glycine--tRNA ligase beta subunit from Pediococcus pentosaceus (strain ATCC 25745 / CCUG 21536 / LMG 10740 / 183-1w).